The sequence spans 225 residues: UPF0173 metal-dependent hydrolase Pars_0810 (225 aa).

It belongs to the UPF0173 family.

The sequence is that of UPF0173 metal-dependent hydrolase Pars_0810 from Pyrobaculum arsenaticum (strain DSM 13514 / JCM 11321 / PZ6).